The primary structure comprises 230 residues: Protein FAM3A (230 aa).

The N-terminal stretch at 1–33 (MRLAGPLRIVALIIIMGLTWILVTILLGGPGVG) is a signal peptide. Intrachain disulfides connect cysteine 59–cysteine 87 and cysteine 65–cysteine 222. Residues 68-226 (EHLSFRIVSG…LEMEGCIPRR (159 aa)) form the GG-type lectin domain.

It belongs to the FAM3 family.

Its subcellular location is the secreted. The protein is Protein FAM3A (Fam3a) of Mus musculus (Mouse).